Here is a 242-residue protein sequence, read N- to C-terminus: Probable transcriptional regulatory protein XCV3282 (242 aa).

This sequence belongs to the TACO1 family.

Its subcellular location is the cytoplasm. This Xanthomonas euvesicatoria pv. vesicatoria (strain 85-10) (Xanthomonas campestris pv. vesicatoria) protein is Probable transcriptional regulatory protein XCV3282.